The sequence spans 598 residues: uncharacterized protein (598 aa).

Phosphoserine is present on S46. Positions 106–441 (LQNHLKTGPF…ADYISLSYSG (336 aa)) constitute an SAC domain. Transmembrane regions (helical) follow at residues 508–528 (TIRCVPYILLACLILFFMTLF) and 535–555 (ILPPSILLILTFLGIVASLYY).

The protein localises to the endoplasmic reticulum membrane. This is an uncharacterized protein from Schizosaccharomyces pombe (strain 972 / ATCC 24843) (Fission yeast).